The chain runs to 150 residues: Large ribosomal subunit protein bL9 (150 aa).

Belongs to the bacterial ribosomal protein bL9 family.

Its function is as follows. Binds to the 23S rRNA. The sequence is that of Large ribosomal subunit protein bL9 from Pediococcus pentosaceus (strain ATCC 25745 / CCUG 21536 / LMG 10740 / 183-1w).